Consider the following 471-residue polypeptide: Putative multidrug resistance protein MdtD (471 aa).

Transmembrane regions (helical) follow at residues 12–32 (LWIVAFGFFMQALDTTIVNTA), 49–69 (MVIVSYVLTVAVMLPASGWLA), 77–97 (IFFTAIVLFTLGSLFCAQSST), 106–126 (VLQGIGGAMMVPVGRLTVMKI), 138–158 (FVTLPGQVGPLLGPALGGLLV), 165–185 (WIFLINLPVGIAGAAATLWLM), 197–217 (FSGFLLLAFGMAALTIALDGY), 225–245 (AGLGALVAGGSAATLLYLWHA), 263–285 (FSLGLFGSLCGRIGSGMLPFMTP), 290–312 (IGLGFSPFHAGLMMMPMVLGSMG), 342–362 (LLFMGVALAGWYWLLPVVMLF), 396–416 (MVMQLSMSLGVSIAGLLLGAF), and 431–451 (IFFWTYLCMALIIALPALVFA).

The protein belongs to the major facilitator superfamily. TCR/Tet family.

The protein localises to the cell inner membrane. The polypeptide is Putative multidrug resistance protein MdtD (Cronobacter sakazakii (strain ATCC BAA-894) (Enterobacter sakazakii)).